The primary structure comprises 79 residues: Small integral membrane protein 40 (79 aa).

Residues 35-55 form a helical membrane-spanning segment; it reads FFIFLALFLTLLMLEAAYKLL.

Its subcellular location is the membrane. In Homo sapiens (Human), this protein is Small integral membrane protein 40.